We begin with the raw amino-acid sequence, 104 residues long: Urease subunit gamma (104 aa).

It belongs to the urease gamma subunit family. As to quaternary structure, heterotrimer of UreA (gamma), UreB (beta) and UreC (alpha) subunits. Three heterotrimers associate to form the active enzyme.

Its subcellular location is the cytoplasm. It catalyses the reaction urea + 2 H2O + H(+) = hydrogencarbonate + 2 NH4(+). It participates in nitrogen metabolism; urea degradation; CO(2) and NH(3) from urea (urease route): step 1/1. The polypeptide is Urease subunit gamma (Actinomyces naeslundii).